The following is a 164-amino-acid chain: C-phycoerythrin alpha chain (164 aa).

Residues Cys-82 and Cys-139 each coordinate (2R,3E)-phycoerythrobilin.

This sequence belongs to the phycobiliprotein family. Heterodimer of an alpha and a beta chain. Contains two covalently linked bilin chromophores.

The protein localises to the cellular thylakoid membrane. In terms of biological role, light-harvesting photosynthetic bile pigment-protein from the phycobiliprotein complex. This Pseudanabaena tenuis (strain PCC 7409) protein is C-phycoerythrin alpha chain (cpeA).